Here is a 323-residue protein sequence, read N- to C-terminus: Fructose-1,6-bisphosphatase class 1 (323 aa).

Mg(2+) contacts are provided by glutamate 84, aspartate 103, leucine 105, and aspartate 106. Residues 106-109 (DGSS), asparagine 198, and lysine 264 each bind substrate. Mg(2+) is bound at residue glutamate 270.

The protein belongs to the FBPase class 1 family. As to quaternary structure, homotetramer. It depends on Mg(2+) as a cofactor.

The protein resides in the cytoplasm. It catalyses the reaction beta-D-fructose 1,6-bisphosphate + H2O = beta-D-fructose 6-phosphate + phosphate. The protein operates within carbohydrate biosynthesis; gluconeogenesis. The chain is Fructose-1,6-bisphosphatase class 1 from Cellvibrio japonicus (strain Ueda107) (Pseudomonas fluorescens subsp. cellulosa).